A 57-amino-acid polypeptide reads, in one-letter code: uncharacterized protein (57 aa).

The chain crosses the membrane as a helical span at residues 21–37; that stretch reads GTYTLVVAFVLAFLVYS.

The protein resides in the host membrane. This is an uncharacterized protein from Human herpesvirus 6B (strain Z29) (HHV-6 variant B).